The chain runs to 167 residues: UPF0179 protein PAE0681 (167 aa).

Residues Pro142–Lys167 are disordered. The span at Ser145 to Ser157 shows a compositional bias: low complexity.

This sequence belongs to the UPF0179 family.

The chain is UPF0179 protein PAE0681 from Pyrobaculum aerophilum (strain ATCC 51768 / DSM 7523 / JCM 9630 / CIP 104966 / NBRC 100827 / IM2).